The following is a 789-amino-acid chain: Ent-kaurene synthase TSP4, chloroplastic (789 aa).

Positions 540 and 544 each coordinate Mg(2+). The DDXXD motif motif lies at 540 to 544 (DDFFD). Residues 638-656 (AYVSFALGPIVLPALYLVG) form a helical membrane-spanning segment. Positions 684, 687, and 692 each coordinate Mg(2+).

It belongs to the terpene synthase family. The cofactor is Mg(2+). In terms of tissue distribution, expressed in leaves and fruits, including trichomes.

It is found in the plastid. The protein resides in the chloroplast membrane. The enzyme catalyses ent-copalyl diphosphate = ent-kaur-16-ene + diphosphate. The protein operates within plant hormone biosynthesis; gibberellin biosynthesis. Functionally, involved in the biosynthesis of labdane-type diterpenoid including cleroda-dienols, and peregrinol lactones and furan derivatives, dopaminergic diterpenoids that can bind to dopamine receptors in the human pituitary gland, have probably ability to lower prolactin levels, and are used to treat menstrual cycle disorders (e.g. premenstrual syndrome and mastodynia). Terpene synthase that produces ent-kaurene from ent-copalyl diphosphate. This Vitex agnus-castus (Chaste tree) protein is Ent-kaurene synthase TSP4, chloroplastic.